The primary structure comprises 446 residues: WD repeat domain phosphoinositide-interacting protein 1 (446 aa).

The Nuclear receptor interaction signature appears at 131–136 (LLKTVL). The WD 1 repeat unit spans residues 184–224 (AHEGTLAAITFNSSGSKLASASEKGTVIRVFSVPEGQKLYE). Residues 225–228 (FRRG) carry the L/FRRG motif motif. WD repeat units follow at residues 230 to 269 (KRYV…DSRP) and 312 to 351 (SGQK…GGEC). Residues 386-406 (ARPSTSAASTVPGYSEDGGAL) form a disordered region.

The protein belongs to the WD repeat PROPPIN family. As to quaternary structure, interacts with androgen receptor (AR) and the estrogen receptors ESR1 and ESR2. Interacts with WIPI2. Interacts with WDR45. Interacts with ATG16L1. May interact with NUDC.

It is found in the golgi apparatus. The protein resides in the trans-Golgi network. The protein localises to the endosome. Its subcellular location is the cytoplasmic vesicle. It localises to the clathrin-coated vesicle. It is found in the preautophagosomal structure membrane. The protein resides in the cytoplasm. The protein localises to the cytoskeleton. In terms of biological role, component of the autophagy machinery that controls the major intracellular degradation process by which cytoplasmic materials are packaged into autophagosomes and delivered to lysosomes for degradation. Plays an important role in starvation- and calcium-mediated autophagy, as well as in mitophagy. Functions downstream of the ULK1 and PI3-kinases that produce phosphatidylinositol 3-phosphate (PtdIns3P) on membranes of the endoplasmic reticulum once activated. Binds phosphatidylinositol 3-phosphate (PtdIns3P), and maybe other phosphoinositides including PtdIns3,5P2 and PtdIns5P, and is recruited to phagophore assembly sites at the endoplasmic reticulum membranes. There, it assists WIPI2 in the recruitment of ATG12-ATG5-ATG16L1, a complex that directly controls the elongation of the nascent autophagosomal membrane. Together with WDR45/WIPI4, promotes ATG2 (ATG2A or ATG2B)-mediated lipid transfer by enhancing ATG2-association with phosphatidylinositol 3-monophosphate (PI3P)-containing membranes. Involved in xenophagy of Staphylococcus aureus. Invading S.aureus cells become entrapped in autophagosome-like WIPI1 positive vesicles targeted for lysosomal degradation. Also plays a distinct role in controlling the transcription of melanogenic enzymes and melanosome maturation, a process that is distinct from starvation-induced autophagy. May also regulate the trafficking of proteins involved in the mannose-6-phosphate receptor (MPR) recycling pathway. In Mus musculus (Mouse), this protein is WD repeat domain phosphoinositide-interacting protein 1 (Wipi1).